The chain runs to 348 residues: (+)-germacrene D synthase (348 aa).

Mg(2+)-binding residues include D97, D101, N242, and S246. Residues 97-101 (DDILD) carry the DDXXD motif motif.

The protein belongs to the terpene synthase family. It depends on Mg(2+) as a cofactor.

It catalyses the reaction (2E,6E)-farnesyl diphosphate = (+)-germacrene D + diphosphate. Its pathway is secondary metabolite biosynthesis; terpenoid biosynthesis. Its function is as follows. Sesquiterpene synthase converting farnesyl diphosphate to eight sesquiterpenes, with (+)-germacrene D and an unidentified oxygenated sesquiterpene as the major products. Has no diterpene synthase activity. The sequence is that of (+)-germacrene D synthase from Selaginella moellendorffii (Spikemoss).